Here is a 150-residue protein sequence, read N- to C-terminus: Macrodomain Ter protein (150 aa).

This sequence belongs to the MatP family. In terms of assembly, homodimer.

It localises to the cytoplasm. Functionally, required for spatial organization of the terminus region of the chromosome (Ter macrodomain) during the cell cycle. Prevents early segregation of duplicated Ter macrodomains during cell division. Binds specifically to matS, which is a 13 bp signature motif repeated within the Ter macrodomain. The sequence is that of Macrodomain Ter protein from Salmonella typhi.